Here is a 177-residue protein sequence, read N- to C-terminus: MIVAAGTKNPNKIKAVKDAYRLFGFPAEVVPVGRPAGTPPQPVGLEEVVKGAVARAKAALEAVPGAEHGVGVEAGAVHAGGAHLDITVAAIADRGGAVTLGFGPAFQIPTAFLPDVLKGVELGELAERYFKKPSVGYREGIIGVLTGRRVTRYQLNLAAVAMALVPRLPKNAKLYRT.

The protein belongs to the YjjX NTPase family. In terms of assembly, homodimer. It depends on Mg(2+) as a cofactor. Requires Mn(2+) as cofactor.

It catalyses the reaction XTP + H2O = XDP + phosphate + H(+). The enzyme catalyses ITP + H2O = IDP + phosphate + H(+). Its function is as follows. Phosphatase that hydrolyzes non-canonical purine nucleotides such as XTP and ITP to their respective diphosphate derivatives. Probably excludes non-canonical purines from DNA/RNA precursor pool, thus preventing their incorporation into DNA/RNA and avoiding chromosomal lesions. This Pyrobaculum arsenaticum (strain DSM 13514 / JCM 11321 / PZ6) protein is Probable inosine/xanthosine triphosphatase.